Consider the following 304-residue polypeptide: Calcium release-activated calcium channel protein 1 (304 aa).

Over residues 1–11 (MHPEPAPPPNN) the composition is skewed to pro residues. A disordered region spans residues 1–49 (MHPEPAPPPNNSNPELPLSGGSSTSGSRRSRRRSGDGEPTGAPPLPPPP). The Cytoplasmic portion of the chain corresponds to 1 to 88 (MHPEPAPPPN…KLYLSRAKLK (88 aa)). The tract at residues 3–49 (PEPAPPPNNSNPELPLSGGSSTSGSRRSRRRSGDGEPTGAPPLPPPP) is required for generation of inwardly rectifying CRAC currents. Positions 12–27 (SNPELPLSGGSSTSGS) are enriched in low complexity. Residues 39–60 (PTGAPPLPPPPAVSYPDWIGQS) form an AKAP5 association region region. Residues 71–91 (SMQALSWRKLYLSRAKLKASS) form an interaction with STIM1 region. A helical transmembrane segment spans residues 89-106 (ASSRTSALLSGFAMVAMV). Topologically, residues 107–120 (EVQLDTDHDYPPGL) are extracellular. Residues 121–141 (LIVFSACTTVLVAVHLFALMI) form a helical membrane-spanning segment. At 142-174 (STCILPNIEAVSNVHNLNSVKESPHERMHRHIE) the chain is on the cytoplasmic side. A helical transmembrane segment spans residues 175–195 (LAWAFSTVIGTLLFLAEVVLL). Topologically, residues 196 to 237 (CWVKFLPLKRQAGQPSPTKPPTEPAVVVANSSNNGGITPGEA) are extracellular. A glycan (N-linked (GlcNAc...) asparagine) is linked at Asn-225. Residues 238 to 258 (AAIASTAIMVPCGLVFIVFAV) form a helical membrane-spanning segment. At 259 to 304 (HFYRSLVSHKTDRQFQELNELAEFARLQDQLDHRGDHSLTPGTHYA) the chain is on the cytoplasmic side. Residues 275–295 (ELNELAEFARLQDQLDHRGDH) form an interaction with STIM1 region. Thr-298 is subject to Phosphothreonine.

The protein belongs to the Orai family. Oligomerizes in homomeric and heteromeric ORAI complexes. Native CRAC channels most likely consist of hexameric ORAI heteromers, implying that diverse ORAI1, ORAI2 and ORAI3 subunit combinations with distinct biophysical properties can operate in a cell-type specific way. ARC channels are heteropentamers consisting of three ORAI1 and two ORAI3 subunits. Interacts with STIM1 and STIM2; this regulates channel activity. Interacts with CALM; this may displace STIM1 and STIM2 and might thereby modulate channel activity. Interacts (via N-terminus) with AKAP5 upon store depletion. Interacts with CRACR2A/EFCAB4B; the interaction is direct and takes place in absence of Ca(2+). Forms a complex with CRACR2A/EFCAB4B and STIM1 at low concentration of Ca(2+), the complex dissociates at elevated Ca(2+) concentrations. Interacts with ASPH (isoform 8). Interacts with SLC35G1. Interacts with UBQLN1. Interacts with ADCY8; interaction is calcium store depletion independent; interaction occurs in membrane raft; interaction increases markedly after store depletion; positively regulates SOCE-induced adenylate cyclase activity; contributes to the targeting of ADCY8 to discrete regions of the plasma membrane that are shielded from other calcium events. Interacts with EFHB; the interaction takes place upon Ca(2+)-store depletion. Interacts (via N- and C-termini) with ATP2C2 (via N-terminus); this interaction regulates Ca(2+) influx at the plasma membrane. Interacts with TSPAN18; this interaction regulates ORAI1 exit from the endoplasmic (ER), and/or Golgi, and trafficking to the cell surface. N-glycosylated. N-glycosylation inhibits channel activity in T cells. Post-translationally, ubiquitinated. In terms of processing, cys-195 is oxidated, leading to inactivation of channel activity.

The protein localises to the cell membrane. The protein resides in the basolateral cell membrane. The catalysed reaction is Ca(2+)(in) = Ca(2+)(out). With respect to regulation, oxidation at Cys-196 leads to inactivation of channel activity. Functionally, pore-forming subunit of two major inward rectifying Ca(2+) channels at the plasma membrane: Ca(2+) release-activated Ca(2+) (CRAC) channels and arachidonate-regulated Ca(2+)-selective (ARC) channels. Assembles with ORAI2 and ORAI3 to form hexameric CRAC channels that mediate Ca(2+) influx upon depletion of endoplasmic reticulum Ca(2+) store and channel activation by Ca(2+) sensor STIM1, a process known as store-operated Ca(2+) entry (SOCE). Various pore subunit combinations may account for distinct CRAC channel spatiotemporal and cell-type specific dynamics. ORAI1 mainly contributes to the generation of Ca(2+) plateaus involved in sustained Ca(2+) entry and is dispensable for cytosolic Ca(2+) oscillations, whereas ORAI2 and ORAI3 generate oscillatory patterns. CRAC channels assemble in Ca(2+) signaling microdomains where Ca(2+) influx is coupled to calmodulin and calcineurin signaling and activation of NFAT transcription factors recruited to ORAI1 via AKAP5. Activates NFATC2/NFAT1 and NFATC3/NFAT4-mediated transcriptional responses. CRAC channels are the main pathway for Ca(2+) influx in T cells and promote the immune response to pathogens by activating NFAT-dependent cytokine and chemokine transcription. Assembles with ORAI3 to form channels that mediate store-independent Ca(2+) influx in response to inflammatory metabolites arachidonate or its derivative leukotriene C4, termed ARC and LRC channels respectively. Plays a prominent role in Ca(2+) influx at the basolateral membrane of mammary epithelial cells independently of the Ca(2+) content of endoplasmic reticulum or Golgi stores. May mediate transepithelial transport of large quantities of Ca(2+) for milk secretion. This is Calcium release-activated calcium channel protein 1 (Orai1) from Rattus norvegicus (Rat).